The sequence spans 166 residues: Small ribosomal subunit protein uS5 (166 aa).

An S5 DRBM domain is found at Tyr12–Val75.

This sequence belongs to the universal ribosomal protein uS5 family. As to quaternary structure, part of the 30S ribosomal subunit. Contacts proteins S4 and S8.

Functionally, with S4 and S12 plays an important role in translational accuracy. In terms of biological role, located at the back of the 30S subunit body where it stabilizes the conformation of the head with respect to the body. The sequence is that of Small ribosomal subunit protein uS5 from Pseudomonas entomophila (strain L48).